A 71-amino-acid chain; its full sequence is Small integral membrane protein 31 (71 aa).

The chain crosses the membrane as a helical span at residues 8 to 28 (LEVAFILLAFFIFSLFTLASI). Over residues 48–57 (RKRKEFKGKK) the composition is skewed to basic residues. The tract at residues 48 to 71 (RKRKEFKGKKNCSDEEHKIETMQP) is disordered. A glycan (N-linked (GlcNAc...) asparagine) is linked at asparagine 58. Positions 58–71 (NCSDEEHKIETMQP) are enriched in basic and acidic residues.

It is found in the membrane. This chain is Small integral membrane protein 31, found in Mus musculus (Mouse).